A 680-amino-acid chain; its full sequence is tRNA 5-methylaminomethyl-2-thiouridine biosynthesis bifunctional protein MnmC (680 aa).

Residues 1–267 (MTAEPNKPCQ…MAAILSSDAP (267 aa)) are tRNA (mnm(5)s(2)U34)-methyltransferase. The interval 273–680 (IGGGLASAHL…LRKLLKGKSL (408 aa)) is FAD-dependent cmnm(5)s(2)U34 oxidoreductase.

It in the N-terminal section; belongs to the methyltransferase superfamily. tRNA (mnm(5)s(2)U34)-methyltransferase family. This sequence in the C-terminal section; belongs to the DAO family. Requires FAD as cofactor.

The protein resides in the cytoplasm. The enzyme catalyses 5-aminomethyl-2-thiouridine(34) in tRNA + S-adenosyl-L-methionine = 5-methylaminomethyl-2-thiouridine(34) in tRNA + S-adenosyl-L-homocysteine + H(+). In terms of biological role, catalyzes the last two steps in the biosynthesis of 5-methylaminomethyl-2-thiouridine (mnm(5)s(2)U) at the wobble position (U34) in tRNA. Catalyzes the FAD-dependent demodification of cmnm(5)s(2)U34 to nm(5)s(2)U34, followed by the transfer of a methyl group from S-adenosyl-L-methionine to nm(5)s(2)U34, to form mnm(5)s(2)U34. The chain is tRNA 5-methylaminomethyl-2-thiouridine biosynthesis bifunctional protein MnmC from Shewanella sp. (strain W3-18-1).